Consider the following 116-residue polypeptide: Small ribosomal subunit protein uS13 (116 aa).

Residues 92 to 116 (RRGLPVRGQNTKNNARTRKGTKRNR) form a disordered region. Positions 106–116 (ARTRKGTKRNR) are enriched in basic residues.

It belongs to the universal ribosomal protein uS13 family. In terms of assembly, part of the 30S ribosomal subunit. Forms a loose heterodimer with protein S19. Forms two bridges to the 50S subunit in the 70S ribosome.

Located at the top of the head of the 30S subunit, it contacts several helices of the 16S rRNA. In the 70S ribosome it contacts the 23S rRNA (bridge B1a) and protein L5 of the 50S subunit (bridge B1b), connecting the 2 subunits; these bridges are implicated in subunit movement. Contacts the tRNAs in the A and P-sites. The polypeptide is Small ribosomal subunit protein uS13 (Lactobacillus acidophilus (strain ATCC 700396 / NCK56 / N2 / NCFM)).